We begin with the raw amino-acid sequence, 345 residues long: S-adenosylmethionine:tRNA ribosyltransferase-isomerase (345 aa).

The protein belongs to the QueA family. In terms of assembly, monomer.

It localises to the cytoplasm. It carries out the reaction 7-aminomethyl-7-carbaguanosine(34) in tRNA + S-adenosyl-L-methionine = epoxyqueuosine(34) in tRNA + adenine + L-methionine + 2 H(+). It participates in tRNA modification; tRNA-queuosine biosynthesis. Functionally, transfers and isomerizes the ribose moiety from AdoMet to the 7-aminomethyl group of 7-deazaguanine (preQ1-tRNA) to give epoxyqueuosine (oQ-tRNA). This Acidithiobacillus ferrooxidans (strain ATCC 53993 / BNL-5-31) (Leptospirillum ferrooxidans (ATCC 53993)) protein is S-adenosylmethionine:tRNA ribosyltransferase-isomerase.